The following is a 228-amino-acid chain: Elongation factor 1-beta (228 aa).

Residues 74–116 (ASKAFTAYGPEGSEASANPKDKPAEEEEEEDLFASDSEDEDPA) are disordered. An igE-binding region spans residues 84–93 (EGSEASANPK). Residues 97 to 115 (AEEEEEEDLFASDSEDEDP) are compositionally biased toward acidic residues.

Belongs to the EF-1-beta/EF-1-delta family. EF-1 is composed of 4 subunits: alpha, beta, delta, and gamma.

Its function is as follows. EF-1-beta and EF-1-delta stimulate the exchange of GDP bound to EF-1-alpha to GTP. This is Elongation factor 1-beta from Penicillium citrinum.